The chain runs to 165 residues: Ribosome maturation factor RimM (165 aa).

A PRC barrel domain is found at Glu-94 to Val-165.

Belongs to the RimM family. As to quaternary structure, binds ribosomal protein uS19.

It localises to the cytoplasm. Its function is as follows. An accessory protein needed during the final step in the assembly of 30S ribosomal subunit, possibly for assembly of the head region. Essential for efficient processing of 16S rRNA. May be needed both before and after RbfA during the maturation of 16S rRNA. It has affinity for free ribosomal 30S subunits but not for 70S ribosomes. The protein is Ribosome maturation factor RimM of Rickettsia canadensis (strain McKiel).